The primary structure comprises 516 residues: Cytochrome P450 monooxygenase dtxS2 (516 aa).

The helical transmembrane segment at 23 to 43 (ILASVIVLLGLKVATILYTAF) threads the bilayer. Asn187 carries an N-linked (GlcNAc...) asparagine glycan. Residues 229-249 (VLVPLLVFPYISWLLVWWLLS) form a helical membrane-spanning segment. A heme-binding site is contributed by Cys458.

Belongs to the cytochrome P450 family. Requires heme as cofactor.

Its subcellular location is the membrane. It functions in the pathway secondary metabolite biosynthesis. In terms of biological role, cytochrome P450 monooxygenase; part of the gene cluster that mediates the biosynthesis of destruxins, insecticidal cyclic hexadepsipeptides which induce flaccid paralysis and visceral muscle contraction in insects through targeting the calcium channels and vacuolar-type ATPases. The aldo-keto reductase dtxS3 converts alpha-ketoisocaproic acid from deaminated leucine into alpha-hydroxyisocaproic acid (HIC), which is the first substrate for destruxin assembly by dtxS1. L-aspartate decarboxylase dtxS4 converts aspartic acid into beta-alanine, the last substrate for the destruxin assembly line performed by dtxS1. The nonribosomal peptide synthetase dtxS1 synthesizes destruxins B and B2, whereas the cytochrome P450 monooxygenase dtxS2 is required to convert destruxin B into other destruxin derivatives, including destructins C, D, A and E. Destruxin E-diol (ED) is further produced in a non-enzymatic manner from destruxin E. Destruxins play an important role in virulence and escape from insect host immune defenses. This Metarhizium robertsii (strain ARSEF 23 / ATCC MYA-3075) (Metarhizium anisopliae (strain ARSEF 23)) protein is Cytochrome P450 monooxygenase dtxS2.